The chain runs to 295 residues: Tissue factor (295 aa).

The N-terminal stretch at M1 to G28 is a signal peptide. Residues A29 to E252 lie on the Extracellular side of the membrane. N-linked (GlcNAc...) asparagine glycosylation is found at N38 and N58. C76 and C84 are oxidised to a cystine. N-linked (GlcNAc...) asparagine glycosylation is found at N95, N109, N170, and N201. A disulfide bridge links C219 with C242. The WKS motif signature appears at W246–S248. The chain crosses the membrane as a helical span at residues T253 to L275. The S-palmitoyl cysteine moiety is linked to residue C276. At C276–A295 the chain is on the cytoplasmic side.

The protein belongs to the tissue factor family. As to quaternary structure, interacts with HSPE; the interaction, inhibited by heparin, promotes the generation of activated factor X and activates coagulation in the presence of activated factor VII.

The protein resides in the membrane. Functionally, initiates blood coagulation by forming a complex with circulating factor VII or VIIa. The [TF:VIIa] complex activates factors IX or X by specific limited proteolysis. TF plays a role in normal hemostasis by initiating the cell-surface assembly and propagation of the coagulation protease cascade. The chain is Tissue factor (F3) from Rattus norvegicus (Rat).